The sequence spans 559 residues: Cytoplasmic polyadenylation element-binding protein 1 (559 aa).

A disordered region spans residues 222-243; that stretch reads SRMDHSSSPLTPPPSASPSGSL. 2 consecutive RRM domains span residues 304–401 and 423–504; these read CKVF…DAQV and NTVF…PYLE. Positions 508, 511, 520, 525, 530, 533, 538, and 546 each coordinate Zn(2+).

It belongs to the RRM CPEB family. As to expression, expressed in oocytes (at protein level). During oocyte maturation becomes detectable at stage Ib, and remains ubiquitously distributed within the oocyte cytoplasm until stage II. It then follows a gradual accumulation to the future animal pole during stage III, and remains localized to this pole at stage IV (at protein level). Expressed in oocytes, blastomeres and pre-mid-blastula transition embryos. Its expression during oogenesis is ubiquitous at stages I and II, but gradually accumulated at the periphery of the oocyte in the presumptive animal pole during stage III. Expression was maintained in that region at stage IV, and then became delocalized at stage V to cover a much broader area presumably encompassing the future blastodisc.

It is found in the cytoplasm. Functionally, sequence-specific RNA-binding protein that regulates mRNA cytoplasmic polyadenylation and translation initiation during oocyte maturation and early development. Binds to the cytoplasmic polyadenylation element (CPE), an uridine-rich sequence element (consensus sequence 5'-UUUUUAU-3') within the mRNA 3'-UTR. This chain is Cytoplasmic polyadenylation element-binding protein 1 (cpeb1), found in Danio rerio (Zebrafish).